The sequence spans 690 residues: Elongation factor G (690 aa).

One can recognise a tr-type G domain in the interval 8–283 (DKYRNIGIMA…AVVDFLPSPL (276 aa)). Residues 17 to 24 (AHIDAGKT), 81 to 85 (DTPGH), and 135 to 138 (NKLD) each bind GTP.

It belongs to the TRAFAC class translation factor GTPase superfamily. Classic translation factor GTPase family. EF-G/EF-2 subfamily.

Its subcellular location is the cytoplasm. Catalyzes the GTP-dependent ribosomal translocation step during translation elongation. During this step, the ribosome changes from the pre-translocational (PRE) to the post-translocational (POST) state as the newly formed A-site-bound peptidyl-tRNA and P-site-bound deacylated tRNA move to the P and E sites, respectively. Catalyzes the coordinated movement of the two tRNA molecules, the mRNA and conformational changes in the ribosome. The polypeptide is Elongation factor G (Zymomonas mobilis subsp. mobilis (strain ATCC 31821 / ZM4 / CP4)).